A 57-amino-acid chain; its full sequence is Mambalgin-3 (57 aa).

Intrachain disulfides connect cysteine 3–cysteine 19, cysteine 12–cysteine 37, cysteine 41–cysteine 49, and cysteine 50–cysteine 55.

It belongs to the three-finger toxin family. Short-chain subfamily. Mambalgin sub-subfamily. In terms of tissue distribution, expressed by the venom gland.

The protein localises to the secreted. Its function is as follows. This three-finger toxin inhibits ASIC channels. It acts as a gating modifier toxin by decreasing the apparent proton sensitivity of activation and by slightly increasing the apparent proton sensitivity for inactivation. It binds more tightly to the closed state and to a much lesser extent the inactivated/desensitized state of ASIC1a. It interacts directly with the outside surface of the thumb domain of chicken ASIC1a (ASIC1a), but does not insert into the acidic pocket as suggested previously. This binding leads to relocation of the thumb domain that could disrupt the acidic pocket of cASIC1a. The peptide exerts both stimulatory and inhibitory effects on ASIC1a. It reversibly inhibits rASIC1a (IC(50)=17 nM), rASIC1b (IC(50)= 44 nM) and rASIC1a-rASIC2a (IC(50)=252 nM) channels. In vivo, it shows a potent naloxone-resistant analgesic effect against acute and inflammatory pain upon central and peripheral injection. In addition, it also has an opioid-independent effect on both thermal and mechanical inflammatory pain after systemic administration and is effective against neuropathic pain. The chain is Mambalgin-3 from Dendroaspis angusticeps (Eastern green mamba).